We begin with the raw amino-acid sequence, 552 residues long: HTH-type transcriptional regulator SgrR (552 aa).

Positions 163–493 (ELKPDLAHHW…DDLDTDAQQW (331 aa)) are solute-binding.

In terms of biological role, activates the small RNA gene sgrS under glucose-phosphate stress conditions as well as yfdZ. Represses its own transcription under both stress and non-stress conditions. Might act as a sensor of the intracellular accumulation of phosphoglucose by binding these molecules in its C-terminal solute-binding domain. This chain is HTH-type transcriptional regulator SgrR, found in Pectobacterium atrosepticum (strain SCRI 1043 / ATCC BAA-672) (Erwinia carotovora subsp. atroseptica).